We begin with the raw amino-acid sequence, 159 residues long: Phosphopantetheine adenylyltransferase (159 aa).

T10 lines the substrate pocket. Residues 10–11 and H18 each bind ATP; that span reads TF. Residues K42, L74, and R88 each contribute to the substrate site. ATP is bound by residues 89–91, E99, and 124–130; these read GLR and YAFISSS.

This sequence belongs to the bacterial CoaD family. In terms of assembly, homohexamer. It depends on Mg(2+) as a cofactor.

It is found in the cytoplasm. It carries out the reaction (R)-4'-phosphopantetheine + ATP + H(+) = 3'-dephospho-CoA + diphosphate. The protein operates within cofactor biosynthesis; coenzyme A biosynthesis; CoA from (R)-pantothenate: step 4/5. Its function is as follows. Reversibly transfers an adenylyl group from ATP to 4'-phosphopantetheine, yielding dephospho-CoA (dPCoA) and pyrophosphate. The protein is Phosphopantetheine adenylyltransferase of Hydrogenovibrio crunogenus (strain DSM 25203 / XCL-2) (Thiomicrospira crunogena).